The following is an 89-amino-acid chain: Large ribosomal subunit protein uL24 (89 aa).

It belongs to the universal ribosomal protein uL24 family. As to quaternary structure, part of the 50S ribosomal subunit.

Its function is as follows. One of two assembly initiator proteins, it binds directly to the 5'-end of the 23S rRNA, where it nucleates assembly of the 50S subunit. One of the proteins that surrounds the polypeptide exit tunnel on the outside of the subunit. The polypeptide is Large ribosomal subunit protein uL24 (Chlorobium chlorochromatii (strain CaD3)).